Consider the following 84-residue polypeptide: Large ribosomal subunit protein bL31B (84 aa).

The protein belongs to the bacterial ribosomal protein bL31 family. Type B subfamily. In terms of assembly, part of the 50S ribosomal subunit.

The sequence is that of Large ribosomal subunit protein bL31B from Rhodococcus erythropolis (strain PR4 / NBRC 100887).